We begin with the raw amino-acid sequence, 45 residues long: uncharacterized protein (45 aa).

Residues 5–25 (IFFIFALSGILAACTVGGGVS) form a helical membrane-spanning segment.

It is found in the membrane. This is an uncharacterized protein from Haemophilus influenzae (strain ATCC 51907 / DSM 11121 / KW20 / Rd).